The chain runs to 65 residues: Neurotoxin BmK-M3 (65 aa).

The LCN-type CS-alpha/beta domain maps to 2–64 (RDAYIAKPEN…VPIRVWGKCH (63 aa)). 4 cysteine pairs are disulfide-bonded: Cys-12–Cys-63, Cys-16–Cys-36, Cys-22–Cys-46, and Cys-26–Cys-48.

This sequence belongs to the long (4 C-C) scorpion toxin superfamily. Sodium channel inhibitor family. Alpha subfamily. Expressed by the venom gland.

The protein localises to the secreted. Functionally, binds to sodium channels (Nav) and inhibits the inactivation of the activated channels, thereby blocking neuronal transmission. This Olivierus martensii (Manchurian scorpion) protein is Neurotoxin BmK-M3.